Here is a 1094-residue protein sequence, read N- to C-terminus: Protein transport protein Sec24C (1094 aa).

Positions 1–338 are disordered; sequence MNVNQSVPPV…PIQVIEDDRN (338 aa). Residues 8–19 show a composition bias toward pro residues; sequence PPVPPFGQPQPI. Low complexity-rich tracts occupy residues 20–29 and 60–77; these read YPGYHQSSYG and SRAPPSSGAPPASTAQAP. Polar residues predominate over residues 90–101; the sequence is DVQNGPSSTVQM. Over residues 123–132 the composition is skewed to pro residues; it reads VLQPYGPPPT. Composition is skewed to polar residues over residues 133 to 144, 165 to 175, 189 to 215, and 240 to 251; these read SAQVATQLSGMQ, SLASASGSFPN, PLSQAQGHPGIQTPQRSAPSQASSFTP, and SVSQPNHVSSPP. Thr214 carries the phosphothreonine modification. Positions 273–282 are enriched in low complexity; it reads PQQPGYQPQQ. Positions 425, 428, 447, and 450 each coordinate Zn(2+). Residues 425-450 form a zinc finger-like region; it reads CNRCKAYMCPFMQFIEGGRRFQCCFC. The stretch at 962-1034 is one Gelsolin-like repeat; that stretch reads TTEPPAVRAS…DNPLSKKVRG (73 aa).

It belongs to the SEC23/SEC24 family. SEC24 subfamily. In terms of assembly, COPII is composed of at least five proteins: the Sec23/24 complex, the Sec13/31 complex and Sar1. Interacts with TMED2 and TMED10. Interacts with GOSR2 (via IxM motif) and STX5 (via IxM motif); recruits GOSR2 and STX5 into COPII-coated vesicles. Interacts with DDHD1. Interacts with STING1; promoting STING1 translocation to the COPII vesicles. As to expression, ubiquitous.

Its subcellular location is the cytoplasmic vesicle. The protein resides in the COPII-coated vesicle membrane. It is found in the endoplasmic reticulum membrane. The protein localises to the cytoplasm. It localises to the cytosol. Component of the coat protein complex II (COPII) which promotes the formation of transport vesicles from the endoplasmic reticulum (ER). The coat has two main functions, the physical deformation of the endoplasmic reticulum membrane into vesicles and the selection of cargo molecules for their transport to the Golgi complex. Plays a central role in cargo selection within the COPII complex and together with SEC24D may have a different specificity compared to SEC24A and SEC24B. May more specifically package GPI-anchored proteins through the cargo receptor TMED10. May also be specific for IxM motif-containing cargos like the SNAREs GOSR2 and STX5. The sequence is that of Protein transport protein Sec24C from Homo sapiens (Human).